Reading from the N-terminus, the 85-residue chain is Platelet factor 4 (85 aa).

Intrachain disulfides connect C25–C51 and C27–C67. S41 carries the phosphoserine modification. 76-82 (KKIIKRL) contacts heparin.

The protein belongs to the intercrine alpha (chemokine CxC) family. As to quaternary structure, homotetramer. Interacts with TNFAIP6 (via Link domain). Interacts with CCR1. Interacts with CXCR3. Interacts with THBD; this interaction enhances generation of activated protein C.

It is found in the secreted. Functionally, chemokine released during platelet aggregation that plays a role in different biological processes including hematopoiesis, cell proliferation, differentiation, and activation. Acts via different functional receptors including CCR1, CXCR3A or CXCR3B. Upon interaction with CXCR3A receptor, induces activated T-lymphocytes migration mediated via downstream Ras/extracellular signal-regulated kinase (ERK) signaling. Neutralizes the anticoagulant effect of heparin by binding more strongly to heparin than to the chondroitin-4-sulfate chains of the carrier molecule. Plays a role in the inhibition of hematopoiesis and in the maintenance of hematopoietic stem cell (HSC) quiescence. Chemotactic for neutrophils and monocytes via CCR1. Inhibits endothelial cell proliferation. In cooperation with toll-like receptor 8/TLR8, induces chromatin remodeling and activates inflammatory gene expression via the TBK1-IRF5 axis. In addition, induces myofibroblast differentiation and collagen synthesis in different precursor cells, including endothelial cells, by stimulating endothelial-to-mesenchymal transition. Interacts with thrombomodulin/THBD to enhance the activation of protein C and thus potentiates its anticoagulant activity. The chain is Platelet factor 4 (PF4) from Ovis aries (Sheep).